The chain runs to 448 residues: Probable glycine dehydrogenase (decarboxylating) subunit 1 (448 aa).

It belongs to the GcvP family. N-terminal subunit subfamily. As to quaternary structure, the glycine cleavage system is composed of four proteins: P, T, L and H. In this organism, the P 'protein' is a heterodimer of two subunits.

The enzyme catalyses N(6)-[(R)-lipoyl]-L-lysyl-[glycine-cleavage complex H protein] + glycine + H(+) = N(6)-[(R)-S(8)-aminomethyldihydrolipoyl]-L-lysyl-[glycine-cleavage complex H protein] + CO2. Functionally, the glycine cleavage system catalyzes the degradation of glycine. The P protein binds the alpha-amino group of glycine through its pyridoxal phosphate cofactor; CO(2) is released and the remaining methylamine moiety is then transferred to the lipoamide cofactor of the H protein. The chain is Probable glycine dehydrogenase (decarboxylating) subunit 1 from Geobacillus thermodenitrificans (strain NG80-2).